Consider the following 105-residue polypeptide: uncharacterized protein (105 aa).

The Cupin type-2 domain occupies 33–100 (LYALDAGTTD…SEDLRVLVVF (68 aa)).

This is an uncharacterized protein from Streptomyces coelicolor (strain ATCC BAA-471 / A3(2) / M145).